The sequence spans 99 residues: Plastocyanin (99 aa).

A Plastocyanin-like domain is found at 1–99; the sequence is LDVLLGGDDG…AGMVGKVTVN (99 aa). The Cu cation site is built by histidine 37, cysteine 84, histidine 87, and methionine 92.

It belongs to the plastocyanin family. Requires Cu(2+) as cofactor.

It localises to the plastid. Its subcellular location is the chloroplast thylakoid membrane. Its function is as follows. Participates in electron transfer between P700 and the cytochrome b6-f complex in photosystem I. This is Plastocyanin (PETE) from Solanum tuberosum (Potato).